Here is a 785-residue protein sequence, read N- to C-terminus: Phenylalanine--tRNA ligase beta subunit (785 aa).

The tRNA-binding domain maps to 39–147 (FPIPRGVVFA…DALPPGTPLS (109 aa)). Residues 399–474 (KPPEAIPFRP…RIQGYETIPL (76 aa)) enclose the B5 domain. Mg(2+) contacts are provided by D452, D458, E461, and E462. The region spanning 688-780 (SRHPAAFRDL…ALRARGFGLR (93 aa)) is the FDX-ACB domain.

Belongs to the phenylalanyl-tRNA synthetase beta subunit family. Type 1 subfamily. As to quaternary structure, tetramer of two alpha and two beta subunits. Requires Mg(2+) as cofactor.

The protein localises to the cytoplasm. The catalysed reaction is tRNA(Phe) + L-phenylalanine + ATP = L-phenylalanyl-tRNA(Phe) + AMP + diphosphate + H(+). This Thermus thermophilus (strain ATCC 27634 / DSM 579 / HB8) protein is Phenylalanine--tRNA ligase beta subunit (pheT).